A 1240-amino-acid polypeptide reads, in one-letter code: RNA-directed RNA polymerase VP2 (1240 aa).

In terms of domain architecture, RdRp catalytic spans 516 to 764 (LVANYINKHM…KLYALFGARI (249 aa)).

This sequence belongs to the reoviridae RNA-directed RNA polymerase family.

It localises to the virion. The catalysed reaction is RNA(n) + a ribonucleoside 5'-triphosphate = RNA(n+1) + diphosphate. Functionally, RNA-directed RNA polymerase that is involved in transcription and genome replication. Following infection, it catalyzes the synthesis of fully conservative plus strands. After core assembly, which consists in recruitment of one capped plus-strand for each genomic segments and polymerase complexes, the polymerase switches mode and catalyzes the synthesis of complementary minus-strands. This is RNA-directed RNA polymerase VP2 (S2) from Oncorhynchus keta (Chum salmon).